The primary structure comprises 313 residues: tRNA-cytidine(32) 2-sulfurtransferase (313 aa).

A PP-loop motif motif is present at residues 46-51; that stretch reads SGGKDS. [4Fe-4S] cluster is bound by residues Cys121, Cys124, and Cys212.

Belongs to the TtcA family. In terms of assembly, homodimer. The cofactor is Mg(2+). Requires [4Fe-4S] cluster as cofactor.

Its subcellular location is the cytoplasm. The enzyme catalyses cytidine(32) in tRNA + S-sulfanyl-L-cysteinyl-[cysteine desulfurase] + AH2 + ATP = 2-thiocytidine(32) in tRNA + L-cysteinyl-[cysteine desulfurase] + A + AMP + diphosphate + H(+). It participates in tRNA modification. Its function is as follows. Catalyzes the ATP-dependent 2-thiolation of cytidine in position 32 of tRNA, to form 2-thiocytidine (s(2)C32). The sulfur atoms are provided by the cysteine/cysteine desulfurase (IscS) system. The chain is tRNA-cytidine(32) 2-sulfurtransferase from Nitrosomonas eutropha (strain DSM 101675 / C91 / Nm57).